We begin with the raw amino-acid sequence, 479 residues long: Ribosomal RNA small subunit methyltransferase F (479 aa).

Residues 125–131 (AAAPGSK), Glu-149, Asp-176, and Asp-194 each bind S-adenosyl-L-methionine. The active-site Nucleophile is Cys-247.

This sequence belongs to the class I-like SAM-binding methyltransferase superfamily. RsmB/NOP family.

Its subcellular location is the cytoplasm. The enzyme catalyses cytidine(1407) in 16S rRNA + S-adenosyl-L-methionine = 5-methylcytidine(1407) in 16S rRNA + S-adenosyl-L-homocysteine + H(+). Specifically methylates the cytosine at position 1407 (m5C1407) of 16S rRNA. This chain is Ribosomal RNA small subunit methyltransferase F, found in Escherichia coli O6:H1 (strain CFT073 / ATCC 700928 / UPEC).